Consider the following 784-residue polypeptide: Protein DBF4 homolog B (784 aa).

Positions 27–117 constitute a BRCT domain; it reads CREITFAGKS…SRGKQLLKKV (91 aa). Positions 222–243 are disordered; the sequence is TVKKKDPGDQEEEEGQRSQKPQ. The DBF4-type zinc finger occupies 244–293; sequence ARKRKGYCECCEETFDTLSEHLVGEHHFRFVSNPLSYKMIDDLAAQLTCD. C251, C254, H264, and H270 together coordinate Zn(2+). Disordered stretches follow at residues 299 to 332, 348 to 368, and 495 to 529; these read FGSPTSPEAERSSQNEDWDLDLAPGEAEPAGNEG, HADCEDQGAPAYLRDGGAEEP, and TVGSQGDVTSHSAANKPHTENCPVDSTGDRHAQPA. A compositionally biased stretch (polar residues) spans 498–507; the sequence is SQGDVTSHSA.

Forms a complex with cdc7. In terms of processing, phosphorylated. Stably phosphorylated throughout the cell cycle.

It localises to the nucleus. Regulatory subunit for cdc7 which activates its kinase activity thereby playing a central role in DNA replication and cell proliferation. Specifically required during the initiation of DNA replication in egg and during early embryonic development. The complex cdc7-dbf4b phosphorylates mcm2 and mcm4 subunits and is required for cdc45 loading. The polypeptide is Protein DBF4 homolog B (dbf4b) (Xenopus laevis (African clawed frog)).